The chain runs to 445 residues: 4-hydroxyphenylpyruvate dioxygenase (445 aa).

Residues 1–11 are compositionally biased toward polar residues; it reads MGHQNAAVSEN. Residues 1-20 form a disordered region; the sequence is MGHQNAAVSENQNHDDGAAS. 2 VOC domains span residues 46-192 and 223-383; these read RFHH…YVSY and RLDH…IFTK. Positions 226, 308, and 394 each coordinate Fe cation.

It belongs to the 4HPPD family. As to quaternary structure, homodimer. It depends on Fe cation as a cofactor.

The protein resides in the cytoplasm. The enzyme catalyses 3-(4-hydroxyphenyl)pyruvate + O2 = homogentisate + CO2. The protein operates within amino-acid degradation; L-phenylalanine degradation; acetoacetate and fumarate from L-phenylalanine: step 3/6. It functions in the pathway cofactor biosynthesis; prenylquinone biosynthesis. Catalyzes the conversion of 4-hydroxyphenylpyruvic acid to homogentisic acid, one of the steps in tyrosine catabolism. This Arabidopsis thaliana (Mouse-ear cress) protein is 4-hydroxyphenylpyruvate dioxygenase (HPD).